A 345-amino-acid polypeptide reads, in one-letter code: Alkaline phosphatase isozyme conversion protein (345 aa).

Residues 1-24 (MFSALRHRTAALALGVCFILPVHA) form the signal peptide. Positions 117, 143, 176, and 204 each coordinate Zn(2+).

It belongs to the peptidase M28 family. M28C subfamily.

Its function is as follows. This protein, presumably an aminopeptidase, mediates the conversion of E.coli alkaline phosphatase isozyme 1, to isozymes 2 and 3 by removing, one by one, the two N-terminal arginine residues. This chain is Alkaline phosphatase isozyme conversion protein (iap), found in Escherichia coli (strain K12).